Consider the following 357-residue polypeptide: Biotin synthase (357 aa).

The region spanning 41–268 is the Radical SAM core domain; the sequence is NEVQISRLLS…KSRVRLSAGR (228 aa). [4Fe-4S] cluster-binding residues include C56, C60, and C63. 4 residues coordinate [2Fe-2S] cluster: C100, C131, C191, and R263.

It belongs to the radical SAM superfamily. Biotin synthase family. In terms of assembly, homodimer. [4Fe-4S] cluster is required as a cofactor. Requires [2Fe-2S] cluster as cofactor.

It carries out the reaction (4R,5S)-dethiobiotin + (sulfur carrier)-SH + 2 reduced [2Fe-2S]-[ferredoxin] + 2 S-adenosyl-L-methionine = (sulfur carrier)-H + biotin + 2 5'-deoxyadenosine + 2 L-methionine + 2 oxidized [2Fe-2S]-[ferredoxin]. Its pathway is cofactor biosynthesis; biotin biosynthesis; biotin from 7,8-diaminononanoate: step 2/2. Functionally, catalyzes the conversion of dethiobiotin (DTB) to biotin by the insertion of a sulfur atom into dethiobiotin via a radical-based mechanism. The protein is Biotin synthase of Shewanella denitrificans (strain OS217 / ATCC BAA-1090 / DSM 15013).